Consider the following 442-residue polypeptide: Septin-8 (442 aa).

Position 2 is an N-acetylalanine (Ala2). At Ser10 the chain carries Phosphoserine. Positions 41–307 (QGFSFNILCV…ELYRRCKLEE (267 aa)) constitute a Septin-type G domain. A G1 motif region spans residues 51 to 58 (GETGIGKS). Residues 51–58 (GETGIGKS), Gly106, 187–195 (KADTISKSE), Gly241, and Arg256 each bind GTP. A G3 motif region spans residues 103-106 (DAVG). Residues 186-189 (AKAD) form a G4 motif region. Residues 322-410 (LQETYEAKRK…RKAAVEALQS (89 aa)) are a coiled coil. The segment covering 377 to 391 (HQEEKRKVEEKRREL) has biased composition (basic and acidic residues). The disordered stretch occupies residues 377–442 (HQEEKRKVEE…WSSIYSVTIP (66 aa)). 2 stretches are compositionally biased toward polar residues: residues 408-420 (LQSQ…SQQP) and 432-442 (GWSSIYSVTIP).

Belongs to the TRAFAC class TrmE-Era-EngA-EngB-Septin-like GTPase superfamily. Septin GTPase family. In terms of assembly, septins polymerize into heterooligomeric protein complexes that form filaments, and can associate with cellular membranes, actin filaments and microtubules. GTPase activity is required for filament formation. Interacts with CDK14, SEPTIN4, SEPTIN5 and SEPTIN7. Interacts with VAMP2; the interaction inhibits interaction of VAMP2 with SYP. Interacts with STX1A.

The protein localises to the cytoplasm. It localises to the cytoskeleton. The protein resides in the synapse. Its subcellular location is the cell projection. It is found in the axon. The protein localises to the cytoplasmic vesicle. It localises to the secretory vesicle. The protein resides in the synaptic vesicle membrane. Its subcellular location is the presynapse. Its function is as follows. Filament-forming cytoskeletal GTPase. May play a role in platelet secretion. Seems to participate in the process of SNARE complex formation in synaptic vesicles. The protein is Septin-8 of Callithrix jacchus (White-tufted-ear marmoset).